The chain runs to 215 residues: Protein LURP-one-related 4 (215 aa).

This sequence belongs to the LOR family.

In terms of biological role, might be related to the phospholipid scramblase and tubby-like superfamily of membrane tethered transcription factors. In Arabidopsis thaliana (Mouse-ear cress), this protein is Protein LURP-one-related 4.